Here is a 478-residue protein sequence, read N- to C-terminus: Glutamine synthetase (478 aa).

The region spanning 16–100 is the GS beta-grasp domain; the sequence is EKVEYVDVRF…INFFVHDPFT (85 aa). The 371-residue stretch at 108–478 folds into the GS catalytic domain; it reads PRNIARKAEN…PYEFALYYDV (371 aa). Positions 133 and 135 each coordinate Mg(2+). Glu-214 contacts ATP. The Mg(2+) site is built by Glu-219 and Glu-227. Position 230–232 (230–232) interacts with ATP; it reads YQF. L-glutamate contacts are provided by residues 271-272 and Gly-272; that span reads NG. Position 276 (His-276) interacts with Mg(2+). Residues 278 to 280 and Ser-280 contribute to the ATP site; that span reads HQS. Residues Arg-329, Glu-335, and Arg-347 each coordinate L-glutamate. Residues Arg-347, Arg-352, and Lys-361 each coordinate ATP. Glu-366 serves as a coordination point for Mg(2+). Arg-368 contacts L-glutamate. An O-AMP-tyrosine modification is found at Tyr-406.

It belongs to the glutamine synthetase family. In terms of assembly, oligomer of 12 subunits arranged in the form of two hexagons. Mg(2+) serves as cofactor.

The protein localises to the cytoplasm. It catalyses the reaction L-glutamate + NH4(+) + ATP = L-glutamine + ADP + phosphate + H(+). When cellular nitrogen levels are high, the C-terminal adenylyl transferase (AT) of GlnE inhibits GlnA by covalent transfer of an adenylyl group from ATP to Tyr-406. Conversely, when nitrogen levels are low, the N-terminal adenylyl removase (AR) of GlnE activates GlnA by removing the adenylyl group by phosphorolysis. The fully adenylated enzyme complex is inactive. In terms of biological role, involved in nitrogen metabolism via ammonium assimilation. Catalyzes the ATP-dependent biosynthesis of glutamine from glutamate and ammonia. Also plays a key role in controlling the ammonia levels within infected host cells and so contributes to the pathogens capacity to inhibit phagosome acidification and phagosome-lysosome fusion. Involved in cell wall biosynthesis via the production of the major component poly-L-glutamine (PLG). PLG synthesis in the cell wall occurs only in nitrogen limiting conditions and on the contrary high nitrogen conditions inhibit PLG synthesis. This is Glutamine synthetase from Mycobacterium bovis (strain ATCC BAA-935 / AF2122/97).